We begin with the raw amino-acid sequence, 118 residues long: Large ribosomal subunit protein bL20 (118 aa).

It belongs to the bacterial ribosomal protein bL20 family.

Functionally, binds directly to 23S ribosomal RNA and is necessary for the in vitro assembly process of the 50S ribosomal subunit. It is not involved in the protein synthesizing functions of that subunit. In Pelagibacter ubique (strain HTCC1062), this protein is Large ribosomal subunit protein bL20.